Consider the following 147-residue polypeptide: 3-dehydroquinate dehydratase (147 aa).

The Proton acceptor role is filled by Tyr23. Residues Asn75, His81, and Asp88 each contribute to the substrate site. The active-site Proton donor is the His101. Residues 102–103 (LS) and Arg112 each bind substrate.

This sequence belongs to the type-II 3-dehydroquinase family. In terms of assembly, homododecamer.

The catalysed reaction is 3-dehydroquinate = 3-dehydroshikimate + H2O. It functions in the pathway metabolic intermediate biosynthesis; chorismate biosynthesis; chorismate from D-erythrose 4-phosphate and phosphoenolpyruvate: step 3/7. Catalyzes a trans-dehydration via an enolate intermediate. This Hahella chejuensis (strain KCTC 2396) protein is 3-dehydroquinate dehydratase.